Reading from the N-terminus, the 215-residue chain is uncharacterized protein (215 aa).

The next 5 helical transmembrane spans lie at 1–21 (MTAEFIIRLILAAIACGAIGM), 36–56 (VLIGMGSALFMIVSKYGFADV), 67–87 (SRIAAQVVTGVGFIGAGNILV), 92–112 (IVGLTTAADIWVTAAIGMVIG), and 118–138 (LGIYGSVMTLLVLEVFHQLTF).

This sequence belongs to the MgtC/SapB family.

The protein resides in the cell inner membrane. This is an uncharacterized protein from Escherichia coli O157:H7.